Here is a 228-residue protein sequence, read N- to C-terminus: Probable septum site-determining protein MinC (228 aa).

It belongs to the MinC family. Interacts with MinD and FtsZ.

Cell division inhibitor that blocks the formation of polar Z ring septums. Rapidly oscillates between the poles of the cell to destabilize FtsZ filaments that have formed before they mature into polar Z rings. Prevents FtsZ polymerization. In Yersinia pseudotuberculosis serotype O:1b (strain IP 31758), this protein is Probable septum site-determining protein MinC.